A 59-amino-acid chain; its full sequence is Large ribosomal subunit protein bL32 (59 aa).

Over residues 1-15 (MANPKRKQSKRRSAN) the composition is skewed to basic residues. The tract at residues 1 to 48 (MANPKRKQSKRRSANRRAANAFIAPEFAKDPTDGSAFRPHRVNPKNGM) is disordered.

This sequence belongs to the bacterial ribosomal protein bL32 family.

This chain is Large ribosomal subunit protein bL32, found in Opitutus terrae (strain DSM 11246 / JCM 15787 / PB90-1).